A 447-amino-acid chain; its full sequence is Tryptophan synthase beta chain (447 aa).

Lysine 92 carries the N6-(pyridoxal phosphate)lysine modification. The interval 408-447 (GLAVKGGEQPKEFSDGPPLGKLAPSGGSAVREATSVGARK) is disordered.

The protein belongs to the TrpB family. Tetramer of two alpha and two beta chains. Pyridoxal 5'-phosphate is required as a cofactor.

The catalysed reaction is (1S,2R)-1-C-(indol-3-yl)glycerol 3-phosphate + L-serine = D-glyceraldehyde 3-phosphate + L-tryptophan + H2O. It participates in amino-acid biosynthesis; L-tryptophan biosynthesis; L-tryptophan from chorismate: step 5/5. The beta subunit is responsible for the synthesis of L-tryptophan from indole and L-serine. The polypeptide is Tryptophan synthase beta chain (Polaromonas sp. (strain JS666 / ATCC BAA-500)).